We begin with the raw amino-acid sequence, 254 residues long: Ubiquinone biosynthesis O-methyltransferase (254 aa).

S-adenosyl-L-methionine is bound by residues Arg-47, Gly-78, Asp-99, and Met-141.

Belongs to the methyltransferase superfamily. UbiG/COQ3 family.

It catalyses the reaction a 3-demethylubiquinol + S-adenosyl-L-methionine = a ubiquinol + S-adenosyl-L-homocysteine + H(+). The catalysed reaction is a 3-(all-trans-polyprenyl)benzene-1,2-diol + S-adenosyl-L-methionine = a 2-methoxy-6-(all-trans-polyprenyl)phenol + S-adenosyl-L-homocysteine + H(+). Its pathway is cofactor biosynthesis; ubiquinone biosynthesis. In terms of biological role, O-methyltransferase that catalyzes the 2 O-methylation steps in the ubiquinone biosynthetic pathway. This chain is Ubiquinone biosynthesis O-methyltransferase, found in Rhodopseudomonas palustris (strain BisB18).